The following is a 236-amino-acid chain: MTKKEMFYEGKGKKLFKTDDENLLISEFKDDLTAFNAEKRGNESGKGVLNCKISTEIFHLLEKNGIKTHLVETISDTEQVVKKCKIVPIEVIIRNVATGSLIKRLGIKDGTVLPFALVEFCLKDDALGDPFINDEHCLILNLVQNEAQISEIKNMARKINSILTPFFDNKNLRLIDFKIELGLTKDNDLVLADEISPDSCRFWDKFSNEKLDKDRFRQDLGNVKMAYEEVLKRILN.

This sequence belongs to the SAICAR synthetase family.

The enzyme catalyses 5-amino-1-(5-phospho-D-ribosyl)imidazole-4-carboxylate + L-aspartate + ATP = (2S)-2-[5-amino-1-(5-phospho-beta-D-ribosyl)imidazole-4-carboxamido]succinate + ADP + phosphate + 2 H(+). It participates in purine metabolism; IMP biosynthesis via de novo pathway; 5-amino-1-(5-phospho-D-ribosyl)imidazole-4-carboxamide from 5-amino-1-(5-phospho-D-ribosyl)imidazole-4-carboxylate: step 1/2. The protein is Phosphoribosylaminoimidazole-succinocarboxamide synthase of Campylobacter jejuni subsp. doylei (strain ATCC BAA-1458 / RM4099 / 269.97).